The chain runs to 294 residues: UDP-3-O-acyl-N-acetylglucosamine deacetylase (294 aa).

The Zn(2+) site is built by His75, His232, and Asp236. His259 acts as the Proton donor in catalysis.

It belongs to the LpxC family. Zn(2+) is required as a cofactor.

It catalyses the reaction a UDP-3-O-[(3R)-3-hydroxyacyl]-N-acetyl-alpha-D-glucosamine + H2O = a UDP-3-O-[(3R)-3-hydroxyacyl]-alpha-D-glucosamine + acetate. Its pathway is glycolipid biosynthesis; lipid IV(A) biosynthesis; lipid IV(A) from (3R)-3-hydroxytetradecanoyl-[acyl-carrier-protein] and UDP-N-acetyl-alpha-D-glucosamine: step 2/6. Catalyzes the hydrolysis of UDP-3-O-myristoyl-N-acetylglucosamine to form UDP-3-O-myristoylglucosamine and acetate, the committed step in lipid A biosynthesis. The sequence is that of UDP-3-O-acyl-N-acetylglucosamine deacetylase from Campylobacter fetus subsp. fetus (strain 82-40).